Consider the following 335-residue polypeptide: SAM pointed domain-containing Ets transcription factor (335 aa).

Positions 1–20 (MGSASPGLSSVSPSHLLLPP) are enriched in low complexity. Disordered stretches follow at residues 1 to 25 (MGSA…TVSR) and 75 to 100 (AKAP…DSQA). One can recognise a PNT domain in the interval 129 to 213 (EVLKDIETAC…AHLDIWKSAA (85 aa)). The ETS DNA-binding region spans 249–332 (IHLWQFLKEL…ISQRLVYQFV (84 aa)).

Belongs to the ETS family. Interacts with the DNA-binding domain of the androgen receptor. Interacts with NKX3-1. As to expression, expressed in a very restricted set of primarily hormone-regulated epithelial tissues with particularly high expression in the prostate gland. Significantly lower expression is seen in other hormone regulated tissues such as mammary gland, salivary gland, and ovary. Expressed in prostate carcinoma cells.

It localises to the nucleus. In terms of biological role, may function as an androgen-independent transactivator of the prostate-specific antigen (PSA) promoter. Binds to 5'-GGAT-3' DNA sequences. May play a role in the regulation of the prostate gland and/or prostate cancer development. Acts as a transcriptional activator for SERPINB5 promoter. The chain is SAM pointed domain-containing Ets transcription factor (SPDEF) from Homo sapiens (Human).